A 196-amino-acid chain; its full sequence is Peroxiredoxin TSA2 (196 aa).

The Thioredoxin domain maps to 3-161 (AEVQKQAPPF…ALRLVEGFQW (159 aa)). Residue Lys14 forms a Glycyl lysine isopeptide (Lys-Gly) (interchain with G-Cter in ubiquitin) linkage. The active-site Cysteine sulfenic acid (-SOH) intermediate is the Cys48. Residues Lys89 and Lys132 each participate in a glycyl lysine isopeptide (Lys-Gly) (interchain with G-Cter in ubiquitin) cross-link. The residue at position 174 (Thr174) is a Phosphothreonine.

The protein belongs to the peroxiredoxin family. AhpC/Prx1 subfamily. As to quaternary structure, homodimer; disulfide-linked, upon oxidation.

It is found in the cytoplasm. It catalyses the reaction a hydroperoxide + [thioredoxin]-dithiol = an alcohol + [thioredoxin]-disulfide + H2O. Thiol-specific peroxidase that catalyzes the reduction of hydrogen peroxide and organic hydroperoxides to water and alcohols, respectively. Plays a role in cell protection against oxidative stress by detoxifying peroxides and as sensor of hydrogen peroxide-mediated signaling events. Can act alternatively as peroxidase and molecular chaperone. Oxidative stress and heat shock exposure cause a reversible shift of the protein structure from low MW species to high MW complexes, triggering a peroxidase-to-chaperone functional switch. The chaperone function of the protein enhances resistance to heat shock. In Saccharomyces cerevisiae (strain ATCC 204508 / S288c) (Baker's yeast), this protein is Peroxiredoxin TSA2.